Here is a 311-residue protein sequence, read N- to C-terminus: Malate dehydrogenase (311 aa).

Residues 7–13 (GAAGGIG) and D34 each bind NAD(+). Substrate is bound by residues R81 and R87. Residues N94 and 117–119 (ITN) each bind NAD(+). N119 and R153 together coordinate substrate. Catalysis depends on H177, which acts as the Proton acceptor. M227 serves as a coordination point for NAD(+).

Belongs to the LDH/MDH superfamily. MDH type 1 family. Homodimer.

It catalyses the reaction (S)-malate + NAD(+) = oxaloacetate + NADH + H(+). Its function is as follows. Catalyzes the reversible oxidation of malate to oxaloacetate. The protein is Malate dehydrogenase of Shewanella sp. (strain MR-4).